Reading from the N-terminus, the 427-residue chain is 3-phosphoshikimate 1-carboxyvinyltransferase (427 aa).

3-phosphoshikimate contacts are provided by lysine 22, serine 23, and arginine 27. Position 22 (lysine 22) interacts with phosphoenolpyruvate. The phosphoenolpyruvate site is built by glycine 96 and arginine 124. Positions 169, 170, 171, 197, 313, 336, and 340 each coordinate 3-phosphoshikimate. Phosphoenolpyruvate is bound at residue glutamine 171. Aspartate 313 acts as the Proton acceptor in catalysis. Phosphoenolpyruvate contacts are provided by arginine 344, arginine 386, and lysine 411.

Belongs to the EPSP synthase family. In terms of assembly, monomer.

Its subcellular location is the cytoplasm. It carries out the reaction 3-phosphoshikimate + phosphoenolpyruvate = 5-O-(1-carboxyvinyl)-3-phosphoshikimate + phosphate. It participates in metabolic intermediate biosynthesis; chorismate biosynthesis; chorismate from D-erythrose 4-phosphate and phosphoenolpyruvate: step 6/7. Its function is as follows. Catalyzes the transfer of the enolpyruvyl moiety of phosphoenolpyruvate (PEP) to the 5-hydroxyl of shikimate-3-phosphate (S3P) to produce enolpyruvyl shikimate-3-phosphate and inorganic phosphate. The sequence is that of 3-phosphoshikimate 1-carboxyvinyltransferase from Klebsiella pneumoniae (strain 342).